The sequence spans 875 residues: MMSIQSIITKETLKKKDTNIEIQEKNMNDLVESASRVIAPLWPIATFAAHHPWMGLEKQSFEQVADWLKEARNVDIYPSASMIHSAKAKGEIEESFLQSGLSRWLDSQSFHIPRKKVEQFCQAALKLEELPSSLLSSPQLNKLAEEMSYINTESMKDSFLQPVSSFIENQKGENLSDILNYHIIKWCKLYLDDSGSSWTMPNREQGLYRAWHHLIKFDPALSKNERSVLKDWPEDAEIALTRALSELGISESNKQAYLEGHLLALPGWAGMILWRSQQSTQEQELLIQYLAVRISMELAIVKPYLPIKNQKAEKKIAIVPLIASWIYWGNISTLKWSQMSAAEQSELLAFAYRFDENIRRKLWLEAWEQTHAEQLKKKISSKQRATNDKKRALAQLAFCIDVRSEPFRRHLEKLGPFETFGIAGFFGLPIATSELGSSDSHPSLPVILKPKHQIKELTDENEFKNYQQRKKIDSSVSYTFKTMKQNVLTSMLLPEVSGPLLGLQMVTRSFVPRRVGSFLRNLRKTMLQKPDTTFSLNHVHDTKCEIPIGFTKEEKVNYVRQALKMVGLTEKFAPLVVMCGHSSQSTNNPYAAALECGACGGAAGGFNAKVFATLCNLPEVREALSAEGIKIPEDTIFAAAEHKTTVDELEWIYIPELSETAQEAFDSIESVMPNVSQHANRERLMQLPNFKTEIKNPSKEAHRFAEDWSEIRPEWGLARNASFIIGQRELTQDCDLEGRAFLHNYDWKQDGSGDILASIIAGPGTVAQWINLQYYASTVAPHYYGSGNKTTQTVTAGLGVMQGNASDLLPGLPWQSVMQSDRETYHSPLRLLIVIQAPTKYIEHLLNNDFTFREKVQNGWVRLASVDPEGRWKNW.

4 residues coordinate Zn(2+): cysteine 399, aspartate 401, histidine 581, and cysteine 596.

This sequence belongs to the inorganic carbon transporter (TC 9.A.2) DabA family. As to quaternary structure, forms a complex with DabB. Requires Zn(2+) as cofactor.

The protein localises to the cell membrane. Its function is as follows. Part of an energy-coupled inorganic carbon pump. This is Probable inorganic carbon transporter subunit DabA from Bacillus thuringiensis (strain Al Hakam).